Reading from the N-terminus, the 198-residue chain is Translation machinery-associated protein 22 (198 aa).

One can recognise an SUI1 domain in the interval 100–171; that stretch reads IIIKRSERTK…EIVEMIRQQV (72 aa).

Belongs to the DENR family. Interacts with the 40S ribosomal subunit.

The protein localises to the cytoplasm. The polypeptide is Translation machinery-associated protein 22 (TMA22) (Cryptococcus neoformans var. neoformans serotype D (strain B-3501A) (Filobasidiella neoformans)).